Here is a 200-residue protein sequence, read N- to C-terminus: Thymidylate kinase (200 aa).

10 to 17 (GIDGAGKS) is an ATP binding site.

The protein belongs to the thymidylate kinase family.

It catalyses the reaction dTMP + ATP = dTDP + ADP. Its function is as follows. Phosphorylation of dTMP to form dTDP in both de novo and salvage pathways of dTTP synthesis. This is Thymidylate kinase from Cupriavidus metallidurans (strain ATCC 43123 / DSM 2839 / NBRC 102507 / CH34) (Ralstonia metallidurans).